Here is a 140-residue protein sequence, read N- to C-terminus: Myelodysplastic syndrome 2 translocation-associated protein (140 aa).

In terms of tissue distribution, highly expressed in peripheral blood leukocytes, spleen, thymus, kidney, pancreas and lung.

The polypeptide is Myelodysplastic syndrome 2 translocation-associated protein (MDS2) (Homo sapiens (Human)).